Consider the following 342-residue polypeptide: S-adenosylmethionine:tRNA ribosyltransferase-isomerase (342 aa).

It belongs to the QueA family. As to quaternary structure, monomer.

The protein resides in the cytoplasm. The catalysed reaction is 7-aminomethyl-7-carbaguanosine(34) in tRNA + S-adenosyl-L-methionine = epoxyqueuosine(34) in tRNA + adenine + L-methionine + 2 H(+). It participates in tRNA modification; tRNA-queuosine biosynthesis. Its function is as follows. Transfers and isomerizes the ribose moiety from AdoMet to the 7-aminomethyl group of 7-deazaguanine (preQ1-tRNA) to give epoxyqueuosine (oQ-tRNA). This Bacillus licheniformis (strain ATCC 14580 / DSM 13 / JCM 2505 / CCUG 7422 / NBRC 12200 / NCIMB 9375 / NCTC 10341 / NRRL NRS-1264 / Gibson 46) protein is S-adenosylmethionine:tRNA ribosyltransferase-isomerase.